A 371-amino-acid polypeptide reads, in one-letter code: Putative transport protein YtvI (371 aa).

A run of 9 helical transmembrane segments spans residues 6–26, 30–50, 65–85, 168–188, 225–245, 256–276, 283–303, 312–332, and 334–354; these read ITIFFRTLFVISMTAGSIAAA, FPLTYPFLIALILSSVIHPVV, VLGVLAFFLLAAFGVLTILVA, FFALLPNTAAVLIFSLLATFF, GFIKAQAVLVFITMVIVFIGL, IAFLIGLVDLLPYLGAGSVFV, SITGQLPQAIGIGILYLVVLI, ILSKSIGIDPLATLIALFAGF, and LFGFLGLIAGPAVLVIIQAFI.

It belongs to the autoinducer-2 exporter (AI-2E) (TC 2.A.86) family.

Its subcellular location is the cell membrane. The polypeptide is Putative transport protein YtvI (ytvI) (Bacillus subtilis (strain 168)).